The sequence spans 250 residues: Aquaporin TIP1-1 (250 aa).

Transmembrane regions (helical) follow at residues 24 to 44 (FAEF…GMAF) and 56 to 76 (AGLI…VSVG). Residues 85 to 87 (NPA) carry the NPA 1 motif. 3 consecutive transmembrane segments (helical) span residues 104 to 126 (LLYW…FSTG), 143 to 163 (ALVL…ATAV), and 172 to 192 (TIAP…GGAF). Residues 198-200 (NPA) carry the NPA 2 motif. Residues 218-238 (YWVGPLIGGGLAGVIYELLFI) form a helical membrane-spanning segment.

The protein belongs to the MIP/aquaporin (TC 1.A.8) family. TIP (TC 1.A.8.10) subfamily. In terms of tissue distribution, expressed in roots, shoots, leaves, tassels, ears and embryos. Expressed in meristems and zones of cell enlargement: tips of primary and lateral roots, leaf primordia, and male and female inflorescence meristems. Highly expressed in the root epidermis and endodermis, parenchyma cells surrounding mature xylem vessels in the root and the stem, phloem companion cells and a ring of cells around the phloem strand in the stem and the leaf sheath, and the basal endosperm transfer cells in developing kernels.

The protein localises to the vacuole membrane. Water channel required to facilitate the transport of water across cell membrane. May support the rapid influx of water into vacuoles during cell expansion, permit osmotic equilibration between the cytosol and the vacuolar content and rapid transcellular water flow through living cells. Its function is impaired by Hg(2+). The protein is Aquaporin TIP1-1 (TIP1-1) of Zea mays (Maize).